The chain runs to 447 residues: Phosphoglucosamine mutase (447 aa).

Residue S102 is the Phosphoserine intermediate of the active site. Residues S102, D241, D243, and D245 each coordinate Mg(2+). Phosphoserine is present on S102.

The protein belongs to the phosphohexose mutase family. It depends on Mg(2+) as a cofactor. Post-translationally, activated by phosphorylation.

The enzyme catalyses alpha-D-glucosamine 1-phosphate = D-glucosamine 6-phosphate. Its function is as follows. Catalyzes the conversion of glucosamine-6-phosphate to glucosamine-1-phosphate. This is Phosphoglucosamine mutase from Methylococcus capsulatus (strain ATCC 33009 / NCIMB 11132 / Bath).